The chain runs to 218 residues: Cytochrome b6 (218 aa).

The helical transmembrane segment at Ile-35–Phe-55 threads the bilayer. Cys-38 is a heme c binding site. Residues His-89 and His-103 each contribute to the heme b site. Helical transmembrane passes span Ala-93–Phe-113, Leu-119–Tyr-139, and Leu-189–Ile-209. Heme b is bound by residues His-190 and His-205.

It belongs to the cytochrome b family. PetB subfamily. As to quaternary structure, the 4 large subunits of the cytochrome b6-f complex are cytochrome b6, subunit IV (17 kDa polypeptide, PetD), cytochrome f and the Rieske protein, while the 4 small subunits are PetG, PetL, PetM and PetN. The complex functions as a dimer. It depends on heme b as a cofactor. Requires heme c as cofactor.

The protein localises to the cellular thylakoid membrane. Functionally, component of the cytochrome b6-f complex, which mediates electron transfer between photosystem II (PSII) and photosystem I (PSI), cyclic electron flow around PSI, and state transitions. This chain is Cytochrome b6, found in Synechococcus sp. (strain RCC307).